Here is a 214-residue protein sequence, read N- to C-terminus: Thiamine-phosphate synthase (214 aa).

Residues 37–41 and asparagine 73 contribute to the 4-amino-2-methyl-5-(diphosphooxymethyl)pyrimidine site; that span reads QYREK. 2 residues coordinate Mg(2+): aspartate 74 and aspartate 93. A 4-amino-2-methyl-5-(diphosphooxymethyl)pyrimidine-binding site is contributed by serine 112. 139–141 contacts 2-[(2R,5Z)-2-carboxy-4-methylthiazol-5(2H)-ylidene]ethyl phosphate; sequence TIS. Lysine 142 contacts 4-amino-2-methyl-5-(diphosphooxymethyl)pyrimidine. 2-[(2R,5Z)-2-carboxy-4-methylthiazol-5(2H)-ylidene]ethyl phosphate-binding positions include glycine 171 and 191-192; that span reads IS.

Belongs to the thiamine-phosphate synthase family. Mg(2+) serves as cofactor.

It catalyses the reaction 2-[(2R,5Z)-2-carboxy-4-methylthiazol-5(2H)-ylidene]ethyl phosphate + 4-amino-2-methyl-5-(diphosphooxymethyl)pyrimidine + 2 H(+) = thiamine phosphate + CO2 + diphosphate. It carries out the reaction 2-(2-carboxy-4-methylthiazol-5-yl)ethyl phosphate + 4-amino-2-methyl-5-(diphosphooxymethyl)pyrimidine + 2 H(+) = thiamine phosphate + CO2 + diphosphate. The enzyme catalyses 4-methyl-5-(2-phosphooxyethyl)-thiazole + 4-amino-2-methyl-5-(diphosphooxymethyl)pyrimidine + H(+) = thiamine phosphate + diphosphate. It participates in cofactor biosynthesis; thiamine diphosphate biosynthesis; thiamine phosphate from 4-amino-2-methyl-5-diphosphomethylpyrimidine and 4-methyl-5-(2-phosphoethyl)-thiazole: step 1/1. In terms of biological role, condenses 4-methyl-5-(beta-hydroxyethyl)thiazole monophosphate (THZ-P) and 2-methyl-4-amino-5-hydroxymethyl pyrimidine pyrophosphate (HMP-PP) to form thiamine monophosphate (TMP). The sequence is that of Thiamine-phosphate synthase from Listeria innocua serovar 6a (strain ATCC BAA-680 / CLIP 11262).